The chain runs to 345 residues: Phosphoribosylformylglycinamidine cyclo-ligase (345 aa).

The protein belongs to the AIR synthase family.

It is found in the cytoplasm. The enzyme catalyses 2-formamido-N(1)-(5-O-phospho-beta-D-ribosyl)acetamidine + ATP = 5-amino-1-(5-phospho-beta-D-ribosyl)imidazole + ADP + phosphate + H(+). It functions in the pathway purine metabolism; IMP biosynthesis via de novo pathway; 5-amino-1-(5-phospho-D-ribosyl)imidazole from N(2)-formyl-N(1)-(5-phospho-D-ribosyl)glycinamide: step 2/2. The chain is Phosphoribosylformylglycinamidine cyclo-ligase from Escherichia coli O127:H6 (strain E2348/69 / EPEC).